We begin with the raw amino-acid sequence, 121 residues long: Small ribosomal subunit protein bS6 (121 aa).

Residues 99 to 121 are disordered; it reads PLPAPRVAPGTEAPAEPEAAAPA. Over residues 110–121 the composition is skewed to low complexity; it reads EAPAEPEAAAPA.

This sequence belongs to the bacterial ribosomal protein bS6 family.

Its function is as follows. Binds together with bS18 to 16S ribosomal RNA. The chain is Small ribosomal subunit protein bS6 from Synechococcus sp. (strain CC9311).